Consider the following 145-residue polypeptide: RNA polymerase-binding transcription factor DksA (145 aa).

Zn(2+) contacts are provided by cysteine 108, cysteine 111, cysteine 129, and cysteine 132. The dksA C4-type zinc finger occupies 108-132; the sequence is CDCCGEEIGIRRLEARPTADLCIDC.

The protein belongs to the DksA family. Interacts directly with the RNA polymerase.

Its subcellular location is the cytoplasm. In terms of biological role, transcription factor that acts by binding directly to the RNA polymerase (RNAP). Required for negative regulation of rRNA expression and positive regulation of several amino acid biosynthesis promoters. Also required for regulation of fis expression. The sequence is that of RNA polymerase-binding transcription factor DksA from Haemophilus influenzae (strain ATCC 51907 / DSM 11121 / KW20 / Rd).